Here is a 964-residue protein sequence, read N- to C-terminus: Reticulon-3 (964 aa).

The span at M1–A24 shows a compositional bias: low complexity. Disordered stretches follow at residues M1–P32, A68–L109, and W179–A200. A2 is subject to N-acetylalanine. At A2 to T795 the chain is on the cytoplasmic side. At S31 the chain carries Phosphoserine. Residues S80–S91 are compositionally biased toward low complexity. Phosphoserine is present on residues S217, S225, S230, S233, S270, S303, and S429. Residues I479–S536 are disordered. Over residues T493–M511 the composition is skewed to basic and acidic residues. A compositionally biased stretch (low complexity) spans E516 to Q527. A Phosphoserine modification is found at S529. T593 bears the Phosphothreonine mark. 3 positions are modified to phosphoserine: S596, S597, and S673. Disordered stretches follow at residues E645–P674 and V697–D723. The segment covering F712–D723 has biased composition (polar residues). A Reticulon domain is found at V776–E964. An intramembrane region (helical) is located at residues L796–L819. Residues S820 to L876 lie on the Cytoplasmic side of the membrane. The helical intramembrane region spans I877–M899. Over T900–G903 the chain is Cytoplasmic. Residues A904 to Y926 constitute an intramembrane region (helical). An interaction with FADD region spans residues V919 to E964. Residues E927–E964 are Cytoplasmic-facing. Residues Q932–D934 form an interaction with BACE1 region.

Homodimer. Interacts with RTN4. Isoform 3 interacts with BACE1, BACE2, BCL2 and FADD. Interacts with ATL1 and ATL2. Isoform 3 interacts with TMEM33. Interacts with ZFYVE27 and with KIF5A in a ZFYVE27-dependent manner. Interacts with RIGI. Interacts with TRIM25. Isoform 1, isoform 3, isoform 4 and isoform 5 are expressed in spinal cord. Isoform 1 is present in brain, where it is expressed in the neurons of cerebral cortex, hippocampus, hypothalamus and cerebellum (at protein level).

The protein localises to the endoplasmic reticulum membrane. Its subcellular location is the golgi apparatus membrane. May be involved in membrane trafficking in the early secretory pathway. Inhibits BACE1 activity and amyloid precursor protein processing. May induce caspase-8 cascade and apoptosis. May favor BCL2 translocation to the mitochondria upon endoplasmic reticulum stress. Induces the formation of endoplasmic reticulum tubules. Also acts as an inflammation-resolving regulator by interacting with both TRIM25 and RIGI, subsequently impairing RIGI 'Lys-63'-linked polyubiquitination leading to IRF3 and NF-kappa-B inhibition. This Mus musculus (Mouse) protein is Reticulon-3 (Rtn3).